Consider the following 405-residue polypeptide: Probable dual-specificity RNA methyltransferase RlmN (405 aa).

The segment covering 1 to 15 (MSSTGSSVSTSGLVL) has biased composition (low complexity). Residues 1 to 34 (MSSTGSSVSTSGLVLPSTPLAEPGKEVPLVVNTP) form a disordered region. The Proton acceptor role is filled by Glu130. In terms of domain architecture, Radical SAM core spans 142–386 (SAARATLCLS…VTVRDTRGSE (245 aa)). Residues Cys149 and Cys391 are joined by a disulfide bond. Residues Cys156, Cys160, and Cys163 each contribute to the [4Fe-4S] cluster site. S-adenosyl-L-methionine contacts are provided by residues 211-212 (GE), Ser245, 268-270 (SLH), and Asn348. Cys391 serves as the catalytic S-methylcysteine intermediate.

It belongs to the radical SAM superfamily. RlmN family. It depends on [4Fe-4S] cluster as a cofactor.

The protein localises to the cytoplasm. The catalysed reaction is adenosine(2503) in 23S rRNA + 2 reduced [2Fe-2S]-[ferredoxin] + 2 S-adenosyl-L-methionine = 2-methyladenosine(2503) in 23S rRNA + 5'-deoxyadenosine + L-methionine + 2 oxidized [2Fe-2S]-[ferredoxin] + S-adenosyl-L-homocysteine. It carries out the reaction adenosine(37) in tRNA + 2 reduced [2Fe-2S]-[ferredoxin] + 2 S-adenosyl-L-methionine = 2-methyladenosine(37) in tRNA + 5'-deoxyadenosine + L-methionine + 2 oxidized [2Fe-2S]-[ferredoxin] + S-adenosyl-L-homocysteine. In terms of biological role, specifically methylates position 2 of adenine 2503 in 23S rRNA and position 2 of adenine 37 in tRNAs. This Cutibacterium acnes (strain DSM 16379 / KPA171202) (Propionibacterium acnes) protein is Probable dual-specificity RNA methyltransferase RlmN.